Reading from the N-terminus, the 180-residue chain is NAD(P)H-quinone oxidoreductase subunit I, chloroplastic (180 aa).

4Fe-4S ferredoxin-type domains are found at residues 55 to 84 (GRIHFEFDKCIACEVCVRVCPIDLPVVNWR) and 95 to 124 (LNYSIDFGICIFCGNCVEYCPTNCLSMTEE). Residues cysteine 64, cysteine 67, cysteine 70, cysteine 74, cysteine 104, cysteine 107, cysteine 110, and cysteine 114 each contribute to the [4Fe-4S] cluster site.

Belongs to the complex I 23 kDa subunit family. As to quaternary structure, NDH is composed of at least 16 different subunits, 5 of which are encoded in the nucleus. It depends on [4Fe-4S] cluster as a cofactor.

Its subcellular location is the plastid. The protein resides in the chloroplast thylakoid membrane. The enzyme catalyses a plastoquinone + NADH + (n+1) H(+)(in) = a plastoquinol + NAD(+) + n H(+)(out). It catalyses the reaction a plastoquinone + NADPH + (n+1) H(+)(in) = a plastoquinol + NADP(+) + n H(+)(out). In terms of biological role, NDH shuttles electrons from NAD(P)H:plastoquinone, via FMN and iron-sulfur (Fe-S) centers, to quinones in the photosynthetic chain and possibly in a chloroplast respiratory chain. The immediate electron acceptor for the enzyme in this species is believed to be plastoquinone. Couples the redox reaction to proton translocation, and thus conserves the redox energy in a proton gradient. This Platanus occidentalis (Sycamore) protein is NAD(P)H-quinone oxidoreductase subunit I, chloroplastic.